A 233-amino-acid polypeptide reads, in one-letter code: Orotidine 5'-phosphate decarboxylase (233 aa).

Substrate is bound by residues Asp13, Lys35, 62 to 71 (DLKFHDIPNT), Thr122, Arg182, Gln191, Gly211, and Arg212. Lys64 (proton donor) is an active-site residue.

This sequence belongs to the OMP decarboxylase family. Type 1 subfamily. As to quaternary structure, homodimer.

It catalyses the reaction orotidine 5'-phosphate + H(+) = UMP + CO2. Its pathway is pyrimidine metabolism; UMP biosynthesis via de novo pathway; UMP from orotate: step 2/2. Its function is as follows. Catalyzes the decarboxylation of orotidine 5'-monophosphate (OMP) to uridine 5'-monophosphate (UMP). The protein is Orotidine 5'-phosphate decarboxylase of Pseudomonas putida (strain ATCC 47054 / DSM 6125 / CFBP 8728 / NCIMB 11950 / KT2440).